The primary structure comprises 875 residues: SPbeta prophage-derived uncharacterized protein YomG (875 aa).

Residues 351-381 (AKKAEISRINSQITNISQEIEKLKDRLSMDK) adopt a coiled-coil conformation. The region spanning 537 to 648 (PVANPTILNN…SIDSSGRILS (112 aa)) is the Fibronectin type-III domain.

The sequence is that of SPbeta prophage-derived uncharacterized protein YomG (yomG) from Bacillus subtilis (strain 168).